The primary structure comprises 268 residues: Imidazole glycerol phosphate synthase subunit HisF (268 aa).

Residues Asp-12 and Asp-131 contribute to the active site.

It belongs to the HisA/HisF family. As to quaternary structure, heterodimer of HisH and HisF.

It localises to the cytoplasm. It carries out the reaction 5-[(5-phospho-1-deoxy-D-ribulos-1-ylimino)methylamino]-1-(5-phospho-beta-D-ribosyl)imidazole-4-carboxamide + L-glutamine = D-erythro-1-(imidazol-4-yl)glycerol 3-phosphate + 5-amino-1-(5-phospho-beta-D-ribosyl)imidazole-4-carboxamide + L-glutamate + H(+). Its pathway is amino-acid biosynthesis; L-histidine biosynthesis; L-histidine from 5-phospho-alpha-D-ribose 1-diphosphate: step 5/9. Functionally, IGPS catalyzes the conversion of PRFAR and glutamine to IGP, AICAR and glutamate. The HisF subunit catalyzes the cyclization activity that produces IGP and AICAR from PRFAR using the ammonia provided by the HisH subunit. In Methanoregula boonei (strain DSM 21154 / JCM 14090 / 6A8), this protein is Imidazole glycerol phosphate synthase subunit HisF.